The following is a 750-amino-acid chain: Methylmalonyl-CoA mutase, mitochondrial (750 aa).

The N-terminal 32 residues, 1 to 32 (MLRVKNQLFLLSPHYLKQVKESSGSRLIRQRF), are a transit peptide targeting the mitochondrion. Gln-50 contributes to the malonyl-CoA binding site. Lys-89 is modified (N6-acetyllysine). Malonyl-CoA contacts are provided by residues 96 to 99 (YPTM) and 106 to 110 (TIRQY). N6-acetyllysine is present on Lys-212. Residues 216–218 (TIQ), Arg-228, Lys-255, His-265, and 304–306 (RLS) each bind malonyl-CoA. Position 335 is an N6-acetyllysine (Lys-335). Lys-343 is subject to N6-succinyllysine. A Phosphoserine modification is found at Ser-481. Position 595 is an N6-succinyllysine (Lys-595). Lys-602 bears the N6-acetyllysine mark. A B12-binding domain is found at 614–746 (RPRLLVAKMG…DDIEKCLEKK (133 aa)). Residue His-627 coordinates adenosylcob(III)alamin.

This sequence belongs to the methylmalonyl-CoA mutase family. Homodimer. Interacts (the apoenzyme form) with MMAA; the interaction is GTP dependent. Requires adenosylcob(III)alamin as cofactor.

The protein localises to the mitochondrion matrix. The protein resides in the mitochondrion. It is found in the cytoplasm. It catalyses the reaction (R)-methylmalonyl-CoA = succinyl-CoA. With respect to regulation, inhibited by itaconyl-CoA, a metabolite that inactivates the coenzyme B12 cofactor. Functionally, catalyzes the reversible isomerization of methylmalonyl-CoA (MMCoA) (generated from branched-chain amino acid metabolism and degradation of dietary odd chain fatty acids and cholesterol) to succinyl-CoA (3-carboxypropionyl-CoA), a key intermediate of the tricarboxylic acid cycle. This Macaca fascicularis (Crab-eating macaque) protein is Methylmalonyl-CoA mutase, mitochondrial (MMUT).